The chain runs to 406 residues: Lysophospholipid transporter LplT (406 aa).

11 consecutive transmembrane segments (helical) span residues 16–36, 53–73, 91–111, 139–159, 164–184, 227–247, 253–273, 285–305, 310–330, 349–369, and 372–392; these read MVAVLCAQFFSAFGDNALLFA, ILQMAFVATYIVLAPFVGQIA, AGALVICFGLNPFLGYSLVGV, MMEASTIAAILLGSVAGGILA, MAALGVCALVYAIAVIANLFI, LFWGAGVTLRFLLVLWVPVAL, ATPTLLNAMVAIGIVVGAGAA, CLPAGVLIGVMVTIFSLQNSM, LLLIIIGILGGFFVVPLNALL, LGENTAMLFMLGLYSLVVKLG, and VVAVGVGFGVVFALAIALLWG.

Belongs to the major facilitator superfamily. LplT (TC 2.A.1.42) family.

Its subcellular location is the cell inner membrane. Its function is as follows. Catalyzes the facilitated diffusion of 2-acyl-glycero-3-phosphoethanolamine (2-acyl-GPE) into the cell. This is Lysophospholipid transporter LplT from Yersinia pestis bv. Antiqua (strain Antiqua).